Reading from the N-terminus, the 715-residue chain is DNA ligase (715 aa).

Residues 47-51 (DADYD), 96-97 (SL), and Glu128 contribute to the NAD(+) site. Catalysis depends on Lys130, which acts as the N6-AMP-lysine intermediate. Arg151, Glu188, Lys306, and Lys330 together coordinate NAD(+). 4 residues coordinate Zn(2+): Cys435, Cys438, Cys453, and Cys459. Residues 637 to 715 (RRDTAVAGKT…EDEWLALIGN (79 aa)) enclose the BRCT domain.

Belongs to the NAD-dependent DNA ligase family. LigA subfamily. It depends on Mg(2+) as a cofactor. Mn(2+) serves as cofactor.

It carries out the reaction NAD(+) + (deoxyribonucleotide)n-3'-hydroxyl + 5'-phospho-(deoxyribonucleotide)m = (deoxyribonucleotide)n+m + AMP + beta-nicotinamide D-nucleotide.. DNA ligase that catalyzes the formation of phosphodiester linkages between 5'-phosphoryl and 3'-hydroxyl groups in double-stranded DNA using NAD as a coenzyme and as the energy source for the reaction. It is essential for DNA replication and repair of damaged DNA. The sequence is that of DNA ligase from Rhodopseudomonas palustris (strain ATCC BAA-98 / CGA009).